The primary structure comprises 605 residues: Formin-binding protein 1-like (605 aa).

The F-BAR domain occupies 1–263 (MSWGTELWDQ…AAKSVDERRD (263 aa)). A coiled-coil region spans residues 66–258 (FTSCIAFFNI…EGMILAAKSV (193 aa)). The interval 245 to 535 (SKCLEGMILA…EFDDEFEDDD (291 aa)) is interaction with CDC42. Residue S295 is modified to Phosphoserine. Residues 392–484 (LEDFSHLPPE…VEGKTGIRGD (93 aa)) are a coiled coil. Positions 397–474 (HLPPEQRRKK…IHKNEAWLSE (78 aa)) constitute an REM-1 domain. The segment at 482 to 538 (RGDRRHSSDINHLVTQGRESPEGSYTDDANQEVRGPPQQHGHHSEFDDEFEDDDPLP) is disordered. Phosphoserine is present on residues S488, S501, and S505. The segment at 522-605 (GHHSEFDDEF…VTLEKSSKGS (84 aa)) is interaction with DNM1. Residues 527 to 536 (FDDEFEDDDP) show a composition bias toward acidic residues. Residues 538 to 599 (PAIGHCKAIY…PTTYIDVTLE (62 aa)) enclose the SH3 domain. Residues 541–597 (GHCKAIYPFDGHNEGTLAMKEGEVLYIIEEDKGDGWTRARRQNGEEGYVPTTYIDVT) form an interaction with DNM2 and WASL region. The tract at residues 541-605 (GHCKAIYPFD…VTLEKSSKGS (65 aa)) is interaction with DAAM1, DIAPH1 and DIAPH2.

The protein belongs to the FNBP1 family. Homodimerizes, the dimers can polymerize end-to-end to form filamentous structures. Interacts with GTP-bound CDC42. Interacts with DAAM1, DIAPH1, DIAPH2, DNM1, DNM2 and WASL/N-WASP. Interacts with ATG3. Interacts (via SH3 domain) with ABI1, WASF2, CDC42 and WIPF1.

It is found in the cytoplasm. Its subcellular location is the cytoskeleton. It localises to the cell cortex. The protein resides in the cytoplasmic vesicle. The protein localises to the cell membrane. In terms of biological role, required to coordinate membrane tubulation with reorganization of the actin cytoskeleton during endocytosis. May bind to lipids such as phosphatidylinositol 4,5-bisphosphate and phosphatidylserine and promote membrane invagination and the formation of tubules. Also promotes CDC42-induced actin polymerization by activating the WASL-WASPIP complex, the predominant form of WASL/N-WASP in cells. Actin polymerization may promote the fission of membrane tubules to form endocytic vesicles. Essential for autophagy of intracellular bacterial pathogens. The protein is Formin-binding protein 1-like (Fnbp1l) of Mus musculus (Mouse).